A 308-amino-acid chain; its full sequence is tRNA pseudouridine synthase B (308 aa).

Asp48 functions as the Nucleophile in the catalytic mechanism.

Belongs to the pseudouridine synthase TruB family. Type 1 subfamily.

It catalyses the reaction uridine(55) in tRNA = pseudouridine(55) in tRNA. Functionally, responsible for synthesis of pseudouridine from uracil-55 in the psi GC loop of transfer RNAs. The sequence is that of tRNA pseudouridine synthase B from Histophilus somni (strain 129Pt) (Haemophilus somnus).